A 95-amino-acid polypeptide reads, in one-letter code: Secretoglobin family 2A member 2 (95 aa).

Residues 1–18 form the signal peptide; sequence MKLVFLFLLVTIPICCYA. N-linked (GlcNAc...) asparagine glycosylation is present at asparagine 35.

The protein belongs to the secretoglobin family. Lipophilin subfamily. In terms of assembly, prostatein is composed of three different peptides called C1, C2 and C3. These form covalent C1:C3 (F) and C2:C3 (S) heterodimers whose non-covalent association forms tetrameric (C1:C3/C3:C2) prostatein molecules. Highly expressed in ventral prostate.

It localises to the secreted. Functionally, part of prostatein which is the major secretory glycoprotein of ventral prostate gland. Steroid-binding protein; can bind non-polar steroids, cholesterol and a group of small proline-rich peptides. This chain is Secretoglobin family 2A member 2 (Scgb2a2), found in Rattus norvegicus (Rat).